Reading from the N-terminus, the 206-residue chain is N-(5'-phosphoribosyl)anthranilate isomerase (206 aa).

This sequence belongs to the TrpF family.

It catalyses the reaction N-(5-phospho-beta-D-ribosyl)anthranilate = 1-(2-carboxyphenylamino)-1-deoxy-D-ribulose 5-phosphate. The protein operates within amino-acid biosynthesis; L-tryptophan biosynthesis; L-tryptophan from chorismate: step 3/5. This Pseudomonas putida (strain ATCC 700007 / DSM 6899 / JCM 31910 / BCRC 17059 / LMG 24140 / F1) protein is N-(5'-phosphoribosyl)anthranilate isomerase.